Consider the following 253-residue polypeptide: 4-hydroxy-tetrahydrodipicolinate reductase (253 aa).

Residue 16-21 (GDTGRM) coordinates NAD(+). Arg44 lines the NADP(+) pocket. Residues 85–87 (GTT) and 111–114 (CANT) contribute to the NAD(+) site. His144 serves as the catalytic Proton donor/acceptor. A (S)-2,3,4,5-tetrahydrodipicolinate-binding site is contributed by His145. The Proton donor role is filled by Lys148. 154–155 (GT) is a (S)-2,3,4,5-tetrahydrodipicolinate binding site.

This sequence belongs to the DapB family.

Its subcellular location is the cytoplasm. The enzyme catalyses (S)-2,3,4,5-tetrahydrodipicolinate + NAD(+) + H2O = (2S,4S)-4-hydroxy-2,3,4,5-tetrahydrodipicolinate + NADH + H(+). The catalysed reaction is (S)-2,3,4,5-tetrahydrodipicolinate + NADP(+) + H2O = (2S,4S)-4-hydroxy-2,3,4,5-tetrahydrodipicolinate + NADPH + H(+). Its pathway is amino-acid biosynthesis; L-lysine biosynthesis via DAP pathway; (S)-tetrahydrodipicolinate from L-aspartate: step 4/4. Its function is as follows. Catalyzes the conversion of 4-hydroxy-tetrahydrodipicolinate (HTPA) to tetrahydrodipicolinate. This chain is 4-hydroxy-tetrahydrodipicolinate reductase, found in Chlamydia trachomatis serovar A (strain ATCC VR-571B / DSM 19440 / HAR-13).